A 321-amino-acid polypeptide reads, in one-letter code: Acetyl-coenzyme A carboxylase carboxyl transferase subunit alpha (321 aa).

A CoA carboxyltransferase C-terminal domain is found at 32–293 (DISEEIARLQ…KRVLQDQLKE (262 aa)).

This sequence belongs to the AccA family. Acetyl-CoA carboxylase is a heterohexamer composed of biotin carboxyl carrier protein (AccB), biotin carboxylase (AccC) and two subunits each of ACCase subunit alpha (AccA) and ACCase subunit beta (AccD).

It is found in the cytoplasm. The enzyme catalyses N(6)-carboxybiotinyl-L-lysyl-[protein] + acetyl-CoA = N(6)-biotinyl-L-lysyl-[protein] + malonyl-CoA. The protein operates within lipid metabolism; malonyl-CoA biosynthesis; malonyl-CoA from acetyl-CoA: step 1/1. Component of the acetyl coenzyme A carboxylase (ACC) complex. First, biotin carboxylase catalyzes the carboxylation of biotin on its carrier protein (BCCP) and then the CO(2) group is transferred by the carboxyltransferase to acetyl-CoA to form malonyl-CoA. The polypeptide is Acetyl-coenzyme A carboxylase carboxyl transferase subunit alpha (Chromobacterium violaceum (strain ATCC 12472 / DSM 30191 / JCM 1249 / CCUG 213 / NBRC 12614 / NCIMB 9131 / NCTC 9757 / MK)).